The following is a 130-amino-acid chain: Large ribosomal subunit protein eL32 (130 aa).

Belongs to the eukaryotic ribosomal protein eL32 family.

This chain is Large ribosomal subunit protein eL32 (rpl32e), found in Pyrococcus horikoshii (strain ATCC 700860 / DSM 12428 / JCM 9974 / NBRC 100139 / OT-3).